A 557-amino-acid chain; its full sequence is DNA ligase B (557 aa).

Lys-125 (N6-AMP-lysine intermediate) is an active-site residue.

This sequence belongs to the NAD-dependent DNA ligase family. LigB subfamily.

It carries out the reaction NAD(+) + (deoxyribonucleotide)n-3'-hydroxyl + 5'-phospho-(deoxyribonucleotide)m = (deoxyribonucleotide)n+m + AMP + beta-nicotinamide D-nucleotide.. Its function is as follows. Catalyzes the formation of phosphodiester linkages between 5'-phosphoryl and 3'-hydroxyl groups in double-stranded DNA using NAD as a coenzyme and as the energy source for the reaction. This Pseudomonas entomophila (strain L48) protein is DNA ligase B.